The following is a 361-amino-acid chain: Septin-12 (361 aa).

Residues Met45–Glu316 form the Septin-type G domain. The segment at Met45–His318 is interaction with SEPTIN7. The segment at Gly55 to Ser62 is G1 motif. GTP-binding positions include Gly55 to Ser62, Thr88, Gly114, Arg194 to Glu202, Gly250, and Arg265. The G3 motif stretch occupies residues Asp111 to Gly114. The segment at Ala193 to Asp196 is G4 motif. Residues Val257–Phe361 are self-association (via N-terminus) to polymerize octameric septin 12-7-6-2/4-2/4-6-7-12 filaments. Positions Pro333–Phe361 are disordered. The segment covering Thr338 to Ala347 has biased composition (low complexity).

Belongs to the TRAFAC class TrmE-Era-EngA-EngB-Septin-like GTPase superfamily. Septin GTPase family. Septins polymerize into heterooligomeric protein complexes that form filaments, and can associate with cellular membranes, actin filaments and microtubules. GTPase activity is required for filament formation. Interacts with SEPTIN6 and SEPTIN11. Component of a octameric complex consisting of SEPTIN12, SEPTIN7, SEPTIN6 and SEPTIN2 or SEPTIN4 in the order 12-7-6-2-2-6-7-12 or 12-7-6-4-4-6-7-12 and located in the sperm annulus; the octamer polymerizes into filaments via the SEPTIN12 N- and C-termini; the SEPTIN12:SEPTIN7 association is mediated by the GTP-binding domains. Interacts with SPAG4 and LMNB1. Associates with alpha- and beta-tubulins.

The protein resides in the cytoplasm. Its subcellular location is the cytoskeleton. It is found in the spindle. It localises to the cell projection. The protein localises to the cilium. The protein resides in the flagellum. In terms of biological role, filament-forming cytoskeletal GTPase. May play a role in cytokinesis (Potential). Involved in spermatogenesis. Involved in the morphogenesis of sperm heads and the elongation of sperm tails probably implicating the association with alpha- and beta-tubulins. Forms a filamentous structure with SEPTIN7, SEPTIN6, SEPTIN2 and probably SEPTIN4 at the sperm annulus which is required for the structural integrity and motility of the sperm tail during postmeiotic differentiation. The polypeptide is Septin-12 (Bos taurus (Bovine)).